The sequence spans 366 residues: Anhydro-N-acetylmuramic acid kinase (366 aa).

Position 10–17 (G10–D17) interacts with ATP.

Belongs to the anhydro-N-acetylmuramic acid kinase family.

The catalysed reaction is 1,6-anhydro-N-acetyl-beta-muramate + ATP + H2O = N-acetyl-D-muramate 6-phosphate + ADP + H(+). Its pathway is amino-sugar metabolism; 1,6-anhydro-N-acetylmuramate degradation. The protein operates within cell wall biogenesis; peptidoglycan recycling. Catalyzes the specific phosphorylation of 1,6-anhydro-N-acetylmuramic acid (anhMurNAc) with the simultaneous cleavage of the 1,6-anhydro ring, generating MurNAc-6-P. Is required for the utilization of anhMurNAc either imported from the medium or derived from its own cell wall murein, and thus plays a role in cell wall recycling. This chain is Anhydro-N-acetylmuramic acid kinase, found in Legionella pneumophila subsp. pneumophila (strain Philadelphia 1 / ATCC 33152 / DSM 7513).